The chain runs to 433 residues: Voltage-gated potassium channel regulatory subunit KCNG3 (433 aa).

Topologically, residues methionine 1–leucine 165 are cytoplasmic. The helical transmembrane segment at alanine 166–alanine 187 threads the bilayer. The Extracellular segment spans residues serine 188–proline 217. A helical transmembrane segment spans residues serine 218–valine 239. The Cytoplasmic segment spans residues serine 240–proline 250. The helical transmembrane segment at leucine 251–phenylalanine 271 threads the bilayer. Residues threonine 272 to alanine 281 lie on the Extracellular side of the membrane. Residues glycine 282 to histidine 302 form a helical; Voltage-sensor membrane-spanning segment. Topologically, residues phenylalanine 303–tyrosine 317 are cytoplasmic. The chain crosses the membrane as a helical span at residues arginine 318–glutamine 339. At leucine 340–isoleucine 357 the chain is on the extracellular side. Residues proline 358–threonine 369 constitute an intramembrane region (helical). Residues threonine 370–aspartate 375 carry the Selectivity filter motif. The stretch at threonine 370–tyrosine 377 is an intramembrane region. At proline 378–arginine 384 the chain is on the extracellular side. Residues isoleucine 385–tyrosine 413 form a helical membrane-spanning segment. Topologically, residues histidine 414–asparagine 433 are cytoplasmic.

This sequence belongs to the potassium channel family. G (TC 1.A.1.2) subfamily. Kv6.3/KCNG3 sub-subfamily. Heterotetramer with KCNB1. Does not form homomultimers.

The protein localises to the cell membrane. The protein resides in the cytoplasm. In terms of biological role, regulatory subunit of the voltage-gated potassium (Kv) channel which, when coassembled with KCNB1, modulates the kinetics parameters of the heterotetrameric channel namely the inactivation and deactivation rate. Potassium channel subunit that does not form functional channels by itself. Reduces the deactivation rate. Moderately acceleratee activation. The sequence is that of Voltage-gated potassium channel regulatory subunit KCNG3 from Mus musculus (Mouse).